Reading from the N-terminus, the 273-residue chain is Pantothenate synthetase (273 aa).

27–34 contributes to the ATP binding site; it reads MGALHDGH. The active-site Proton donor is histidine 34. A (R)-pantoate-binding site is contributed by glutamine 58. Glutamine 58 is a binding site for beta-alanine. 144 to 147 provides a ligand contact to ATP; the sequence is GKKD. Glutamine 150 serves as a coordination point for (R)-pantoate. ATP is bound by residues valine 173 and 181–184; that span reads LSSR.

Belongs to the pantothenate synthetase family. Homodimer.

It is found in the cytoplasm. It catalyses the reaction (R)-pantoate + beta-alanine + ATP = (R)-pantothenate + AMP + diphosphate + H(+). It participates in cofactor biosynthesis; (R)-pantothenate biosynthesis; (R)-pantothenate from (R)-pantoate and beta-alanine: step 1/1. Catalyzes the condensation of pantoate with beta-alanine in an ATP-dependent reaction via a pantoyl-adenylate intermediate. The protein is Pantothenate synthetase of Campylobacter curvus (strain 525.92).